Consider the following 259-residue polypeptide: 3-methyl-2-oxobutanoate hydroxymethyltransferase (259 aa).

Mg(2+)-binding residues include aspartate 44 and aspartate 83. 3-methyl-2-oxobutanoate contacts are provided by residues 44 to 45 (DS), aspartate 83, and lysine 112. Glutamate 114 is a Mg(2+) binding site. The Proton acceptor role is filled by glutamate 177.

Belongs to the PanB family. In terms of assembly, homodecamer; pentamer of dimers. The cofactor is Mg(2+).

Its subcellular location is the cytoplasm. It carries out the reaction 3-methyl-2-oxobutanoate + (6R)-5,10-methylene-5,6,7,8-tetrahydrofolate + H2O = 2-dehydropantoate + (6S)-5,6,7,8-tetrahydrofolate. Its pathway is cofactor biosynthesis; (R)-pantothenate biosynthesis; (R)-pantoate from 3-methyl-2-oxobutanoate: step 1/2. In terms of biological role, catalyzes the reversible reaction in which hydroxymethyl group from 5,10-methylenetetrahydrofolate is transferred onto alpha-ketoisovalerate to form ketopantoate. The sequence is that of 3-methyl-2-oxobutanoate hydroxymethyltransferase from Nitratiruptor sp. (strain SB155-2).